Consider the following 498-residue polypeptide: Dynein regulatory complex subunit 2 (498 aa).

Coiled-coil stretches lie at residues 98-160 (VIKS…RKTI), 250-311 (KDEK…KAQR), and 417-441 (SLRHRRAQLLEINEKLREMLRQYLD).

It belongs to the DRC2 family. Component of the nexin-dynein regulatory complex (N-DRC). Interacts with DRC1.

Its subcellular location is the cytoplasm. The protein resides in the cytoskeleton. It is found in the flagellum basal body. The protein localises to the cell projection. It localises to the cilium. Its subcellular location is the flagellum. The protein resides in the flagellum axoneme. Its function is as follows. Component of the nexin-dynein regulatory complex (N-DRC), a key regulator of ciliary/flagellar motility which maintains the alignment and integrity of the distal axoneme and regulates microtubule sliding in motile axonemes. Plays a critical role in the assembly of N-DRC and also stabilizes the assembly of multiple inner dynein arms and radial spokes. Coassembles with DRC1 to form a central scaffold needed for assembly of the N-DRC and its attachment to the outer doublet microtubules. The chain is Dynein regulatory complex subunit 2 (CCDC65) from Bos taurus (Bovine).